Reading from the N-terminus, the 1234-residue chain is PAN2-PAN3 deadenylation complex catalytic subunit PAN2 (1234 aa).

The segment at 12-32 (LKNSNNNSNSNSSSNNSSNGV) is disordered. The segment covering 14–30 (NSNNNSNSNSSSNNSSN) has biased composition (low complexity). WD repeat units lie at residues 176–213 (NHTG…SIKT), 272–315 (AFPA…VYHA), and 342–381 (QQQP…TLSK). The disordered stretch occupies residues 323 to 346 (PLPPAGSSAAQQQKQQQQQQQQPH). Residues 333–344 (QQQKQQQQQQQQ) show a composition bias toward low complexity. The tract at residues 383-537 (FVNFPQEIER…DSIFQCQNDE (155 aa)) is linker. In terms of domain architecture, USP spans 538 to 946 (KIPNCYSRLQ…KPVIVIYQEV (409 aa)). Positions 751-775 (PNTQQDQQQQQQQQQQQQQQQQPTN) are disordered. Residues 754 to 772 (QQDQQQQQQQQQQQQQQQQ) show a composition bias toward low complexity. 4 residues coordinate a divalent metal cation: D1004, E1006, D1138, and D1191. The region spanning 1072–1199 (GEAFIDDYIV…EDARTALLLY (128 aa)) is the Exonuclease domain.

The protein belongs to the peptidase C19 family. PAN2 subfamily. Forms a heterotrimer with an asymmetric homodimer of the regulatory subunit PAN3 to form the poly(A)-nuclease (PAN) deadenylation complex. Requires a divalent metal cation as cofactor.

It localises to the cytoplasm. The catalysed reaction is Exonucleolytic cleavage of poly(A) to 5'-AMP.. Its activity is regulated as follows. Positively regulated by the regulatory subunit PAN3. In terms of biological role, catalytic subunit of the poly(A)-nuclease (PAN) deadenylation complex, one of two cytoplasmic mRNA deadenylases involved in mRNA turnover. PAN specifically shortens poly(A) tails of RNA and the activity is stimulated by poly(A)-binding protein PAB1. PAN deadenylation is followed by rapid degradation of the shortened mRNA tails by the CCR4-NOT complex. Deadenylated mRNAs are then degraded by two alternative mechanisms, namely exosome-mediated 3'-5' exonucleolytic degradation, or deadenylation-dependent mRNA decaping and subsequent 5'-3' exonucleolytic degradation by XRN1. May also be involved in post-transcriptional maturation of mRNA poly(A) tails. This Lodderomyces elongisporus (strain ATCC 11503 / CBS 2605 / JCM 1781 / NBRC 1676 / NRRL YB-4239) (Yeast) protein is PAN2-PAN3 deadenylation complex catalytic subunit PAN2.